The following is a 722-amino-acid chain: Probable C-mannosyltransferase DPY19L4 (722 aa).

The segment at 1 to 34 (MAKEEGTSVEPRQRKKQRTSGSQEAKAEKIRRTP) is disordered. The residue at position 2 (A2) is an N-acetylalanine. Over residues 25 to 34 (AKAEKIRRTP) the composition is skewed to basic and acidic residues. Transmembrane regions (helical) follow at residues 51–71 (IVIGCLAAVISGMMHVFYLSA), 160–177 (VYFYIGIVFGLQGMYVTA), 183–201 (WLMSGTWLAGMLTVAWFLI), 246–262 (FCYLLLSTSTYTFMMVW), 268–284 (VLFLQAVSLLLLDIFSV), 291–307 (YEVYKVYIFSLFLGYLL), 313–331 (ALLVSPLLSLVGAFMLVKC), 351–369 (FYLLCTLPVTLNLIVKMFV), 420–440 (LLPFYVLVLIICLLSMTQVFF), 465–485 (IIYHVIHTLLLGSLAMLMEGL), 487–507 (FIWTPYVCMLAAFGVCSPELW), and 521–541 (PMLLALILSMAVPTIIGLSLW).

It belongs to the dpy-19 family.

It localises to the membrane. Probable C-mannosyltransferase that mediates C-mannosylation of tryptophan residues on target proteins. The protein is Probable C-mannosyltransferase DPY19L4 (Dpy19l4) of Mus musculus (Mouse).